A 492-amino-acid polypeptide reads, in one-letter code: Probable malate:quinone oxidoreductase (492 aa).

Belongs to the MQO family. FAD serves as cofactor.

It carries out the reaction (S)-malate + a quinone = a quinol + oxaloacetate. Its pathway is carbohydrate metabolism; tricarboxylic acid cycle; oxaloacetate from (S)-malate (quinone route): step 1/1. The polypeptide is Probable malate:quinone oxidoreductase (Methylobacillus flagellatus (strain ATCC 51484 / DSM 6875 / VKM B-1610 / KT)).